Here is a 425-residue protein sequence, read N- to C-terminus: Serine--tRNA ligase (425 aa).

233 to 235 (TAE) lines the L-serine pocket. Position 264-266 (264-266 (RRE)) interacts with ATP. E287 contributes to the L-serine binding site. 351–354 (EISS) contacts ATP. An L-serine-binding site is contributed by S385.

The protein belongs to the class-II aminoacyl-tRNA synthetase family. Type-1 seryl-tRNA synthetase subfamily. As to quaternary structure, homodimer. The tRNA molecule binds across the dimer.

The protein localises to the cytoplasm. The catalysed reaction is tRNA(Ser) + L-serine + ATP = L-seryl-tRNA(Ser) + AMP + diphosphate + H(+). It catalyses the reaction tRNA(Sec) + L-serine + ATP = L-seryl-tRNA(Sec) + AMP + diphosphate + H(+). Its pathway is aminoacyl-tRNA biosynthesis; selenocysteinyl-tRNA(Sec) biosynthesis; L-seryl-tRNA(Sec) from L-serine and tRNA(Sec): step 1/1. Functionally, catalyzes the attachment of serine to tRNA(Ser). Is also able to aminoacylate tRNA(Sec) with serine, to form the misacylated tRNA L-seryl-tRNA(Sec), which will be further converted into selenocysteinyl-tRNA(Sec). This chain is Serine--tRNA ligase, found in Synechococcus sp. (strain CC9902).